The primary structure comprises 751 residues: MESSLIHHIIIVLLLLWFISSLNRSHAFFYFLALIYLYLVHERYVMRLKRKLQFEERKQANQRRVLSDSESVRWMNYAVEKIWPICMEQIASQKILGPIIPWFLEKYRPWTAKKAVIQHLYMGRNPPLLTDIRVLRQSTGDDHLVLELGMNFLAADDMSAILAVKLRKRLGFGMWTKLHLTGMHVEGKVLIGVKFLRRWPFLGRLRVCFAEPPYFQMTVKPIFTHGLDVAVLPGIAGWLDKLLSIAFEQTLVQPNMLVVDMEKFVSPTSENWFFVDEKEPVAHVLVEVFEASDLKPSDLNGLADPYVKGKLGAYRFKTKIQKKTLSPKWHEEFKIPIFTWDSPSILNIEVGDKDRFVDDTLGECSVNIEEFRGGQRNDMWLSLQNIKMGRLHLAITVIEDNAKSSDDPLKKAKLNKEDIQTSFASDTTNLGSFSSDKSPSVVDNFEPIKIDGQEETAIWVQKPGAEVSQIWEPRKGKSRRLDSQIQRTPNDESLSNGSSSTDDNQEGSKNPMKSVGRGLRKIGSMFHRNVKKEEFLIGSIEEESQSQSPRINLKAVNQKDVGLNFIVDDNLSGPLSGKSLDGESLDAEENSGKGHMKDVAKSFLKQAEKSAKQIKHAFSRKGSMKPRDGHKEIVPESDSGTDSESSDDDDAFTCVKNLATEPGKLTRDGNIERTGDDDHVDSTTLATAKEDSSGDILEDSTDVEAKEEKLKEAAESETRDMDTAMNIKTEDEKGDTLKNIEEGEEKESSSK.

Transmembrane regions (helical) follow at residues 2–22 (ESSLIHHIIIVLLLLWFISSL) and 26–46 (HAFFYFLALIYLYLVHERYVM). Residues 68–262 (DSESVRWMNY…QPNMLVVDME (195 aa)) enclose the SMP-LTD domain. A C2 domain is found at 267 to 381 (PTSENWFFVD…RGGQRNDMWL (115 aa)). Residues aspartate 298, aspartate 304, aspartate 352, aspartate 354, and aspartate 359 each contribute to the Ca(2+) site. Disordered regions lie at residues 469-519 (QIWE…GRGL) and 572-751 (SGPL…SSSK). Residues 472–482 (EPRKGKSRRLD) show a composition bias toward basic and acidic residues. Residues 483–502 (SQIQRTPNDESLSNGSSSTD) are compositionally biased toward polar residues. Positions 590-611 (NSGKGHMKDVAKSFLKQAEKSA) are enriched in basic and acidic residues. Positions 612–624 (KQIKHAFSRKGSM) are enriched in basic residues. The span at 625-634 (KPRDGHKEIV) shows a compositional bias: basic and acidic residues. The segment covering 639–651 (SGTDSESSDDDDA) has biased composition (acidic residues). Basic and acidic residues-rich tracts occupy residues 664-681 (KLTRDGNIERTGDDDHVD) and 703-751 (VEAK…SSSK). Residues 701-728 (TDVEAKEEKLKEAAESETRDMDTAMNIK) adopt a coiled-coil conformation.

It belongs to the extended synaptotagmin family. Requires Ca(2+) as cofactor.

Its subcellular location is the membrane. The protein is C2 domain-containing protein At1g53590 (NTMC2T6.1) of Arabidopsis thaliana (Mouse-ear cress).